We begin with the raw amino-acid sequence, 191 residues long: MGQGASKIFGKLFSKKEVRILMVGLDAAGKTTILYKLMLGEVVTTVPTIGFNVETVEYKNINFTVWDVGGQDSIRPLWRHYYQNTDALIYVIDSADLEPKRIEDAKNELHTLLGEDELRDAALLVFANKQDLPKAMSTTDLTERLGLQELKKRDWYIQPTCARSGDGLYQGLDWLSDYIFDKKNKKKGKKR.

Glycine 2 is lipidated: N-myristoyl glycine. Residues 24–31 (GLDAAGKT), 67–71 (DVGGQ), and 128–131 (NKQD) contribute to the GTP site.

This sequence belongs to the small GTPase superfamily. Arf family.

It is found in the golgi apparatus. GTP-binding protein involved in protein trafficking; may modulate vesicle budding and uncoating within the Golgi apparatus. This chain is ADP-ribosylation factor, found in Giardia intestinalis (Giardia lamblia).